Here is a 168-residue protein sequence, read N- to C-terminus: Cytolysin secretion protein (168 aa).

The polypeptide is Cytolysin secretion protein (vvhB) (Vibrio vulnificus (strain CMCP6)).